The primary structure comprises 164 residues: Cytochrome c-type biogenesis protein CcmE (164 aa).

The Cytoplasmic segment spans residues 1–8 (MNPRRKQR). Residues 9–29 (LAVVGIIGFLIVSAVGLMLYA) form a helical; Signal-anchor for type II membrane protein membrane-spanning segment. The Periplasmic segment spans residues 30–164 (LNDSIDLFYT…YESSNGAGSK (135 aa)). Heme contacts are provided by His-128 and Tyr-132. The disordered stretch occupies residues 142-164 (KGIKHVKPENMPTYESSNGAGSK). Residues 154–164 (TYESSNGAGSK) are compositionally biased toward polar residues.

This sequence belongs to the CcmE/CycJ family.

It is found in the cell inner membrane. In terms of biological role, heme chaperone required for the biogenesis of c-type cytochromes. Transiently binds heme delivered by CcmC and transfers the heme to apo-cytochromes in a process facilitated by CcmF and CcmH. The chain is Cytochrome c-type biogenesis protein CcmE from Alteromonas mediterranea (strain DSM 17117 / CIP 110805 / LMG 28347 / Deep ecotype).